The following is a 1928-amino-acid chain: Lactase/phlorizin hydrolase (1928 aa).

Residues 1–21 (MELPWTALFLSTVLLGLSCQG) form the signal peptide. Residues 22-867 (SDWESDRNFI…LPVRADFTSR (846 aa)) constitute a propeptide, XBetaGly. Over 22–1883 (SDWESDRNFI…LMLGIAEAQT (1862 aa)) the chain is Extracellular. The segment at 46–289 (NYPPGKQGSD…FIYTLKLEDC (244 aa)) is glycosyl hydrolase-1 1; Region I. Positions 364 to 856 (VWAAFANQSR…GFSAKKVKRN (493 aa)) are glycosyl hydrolase-1 2; Region II. N-linked (GlcNAc...) asparagine glycosylation is found at Asn-370, Asn-514, Asn-824, Asn-936, Asn-948, Asn-991, and Asn-1037. Positions 904–1367 (RFRDDFLWGV…DLIANNGMPL (464 aa)) are glycosyl hydrolase-1 3; Region III. Phlorizin hydrolase/Glycosylceramidase activity. Glu-1067 acts as the Proton donor; for phlorizin hydrolase/Glycosylceramidase activity in catalysis. N-linked (GlcNAc...) asparagine glycosylation is found at Asn-1176 and Asn-1240. Glu-1274 serves as the catalytic Nucleophile; for phlorizin hydrolase/Glycosylceramidase activity. Residues Asn-1281 and Asn-1509 are each glycosylated (N-linked (GlcNAc...) asparagine). The glycosyl hydrolase-1 4; Region IV. Lactase activity stretch occupies residues 1374–1847 (LYGEFPKGFI…CNGFPDPAQG (474 aa)). Residue Glu-1539 is the Proton donor; for lactase activity of the active site. N-linked (GlcNAc...) asparagine glycosylation is found at Asn-1657 and Asn-1684. Glu-1750 functions as the Nucleophile; for lactase activity in the catalytic mechanism. N-linked (GlcNAc...) asparagine glycans are attached at residues Asn-1762 and Asn-1815. The chain crosses the membrane as a helical span at residues 1884–1902 (ALYVLFALLLLGACSLAFL). At 1903–1928 (TYNTGRRSKQGNAQPSQHQLSPISSF) the chain is on the cytoplasmic side.

Belongs to the glycosyl hydrolase 1 family. In terms of assembly, homodimer. In terms of processing, N-glycosylated. In terms of tissue distribution, intestine.

The protein localises to the apical cell membrane. It carries out the reaction lactose + H2O = beta-D-galactose + D-glucose. The enzyme catalyses phlorizin + H2O = phloretin + beta-D-glucose. The catalysed reaction is D-cellobiose + H2O = beta-D-glucose + D-glucose. It catalyses the reaction quercetin 4'-O-beta-D-glucoside + H2O = quercetin + beta-D-glucose. It carries out the reaction quercetin 3-O-beta-D-glucoside + H2O = quercetin + beta-D-glucose. The enzyme catalyses kaempferol 3-O-beta-D-glucoside + H2O = kaempferol + beta-D-glucose. The catalysed reaction is luteolin 7-O-beta-D-glucoside + H2O = luteolin + beta-D-glucose. It catalyses the reaction luteolin 4'-O-beta-D-glucoside + H2O = luteolin + beta-D-glucose. It carries out the reaction (2S)-naringenin 7-O-beta-D-glucoside + H2O = (2S)-naringenin + beta-D-glucose. The enzyme catalyses eriodictyol-7-O-beta-D-glucoside + H2O = (S)-eriodictyol + beta-D-glucose. The catalysed reaction is apigenin 7-O-beta-D-glucoside + H2O = apigenin + beta-D-glucose. It catalyses the reaction daidzein 7-O-beta-D-glucoside + H2O = daidzein + beta-D-glucose + H(+). It carries out the reaction genistein 7-O-beta-D-glucoside + H2O = genistein + beta-D-glucose. The enzyme catalyses a beta-D-galactosyl-N-acylsphingosine + H2O = a ceramide + beta-D-galactose.. The catalysed reaction is beta-D-glucosyl-(1&lt;-&gt;1')-N-hexadecanoylsphing-4-enine + H2O = N-hexadecanoylsphing-4-enine + beta-D-glucose. It catalyses the reaction beta-D-galactosyl-(1&lt;-&gt;1')-N-hexadecanoylsphing-4-enine + H2O = beta-D-galactose + N-hexadecanoylsphing-4-enine. It carries out the reaction beta-D-galactosyl-(1&lt;-&gt;1')-N-hexadecanoylsphinganine + H2O = N-hexadecanoylsphinganine + beta-D-galactose. The enzyme catalyses beta-D-glucosyl-(1&lt;-&gt;1')-N-hexadecanoylsphinganine + H2O = N-hexadecanoylsphinganine + beta-D-glucose. In terms of biological role, broad specificity glycosidase of the intestinal brush border membrane that hydrolyzes lactose, the main sugar in mammalian milk, to produce D-glucose and D-galactose. The mature protein is composed of two domains that catalyze the hydrolysis of beta-glucopyranosides and beta-galactopyranosides, with a preference for hydrophilic aglycones (in lactose and cellobiose) for one domain and hydrophobic aglycones (in phlorizin and glycosylceramides) for the other. This chain is Lactase/phlorizin hydrolase, found in Rattus norvegicus (Rat).